A 348-amino-acid chain; its full sequence is Nicotinate-nucleotide--dimethylbenzimidazole phosphoribosyltransferase (348 aa).

The active-site Proton acceptor is glutamate 315.

Belongs to the CobT family.

It carries out the reaction 5,6-dimethylbenzimidazole + nicotinate beta-D-ribonucleotide = alpha-ribazole 5'-phosphate + nicotinate + H(+). It participates in nucleoside biosynthesis; alpha-ribazole biosynthesis; alpha-ribazole from 5,6-dimethylbenzimidazole: step 1/2. Functionally, catalyzes the synthesis of alpha-ribazole-5'-phosphate from nicotinate mononucleotide (NAMN) and 5,6-dimethylbenzimidazole (DMB). In Dechloromonas aromatica (strain RCB), this protein is Nicotinate-nucleotide--dimethylbenzimidazole phosphoribosyltransferase.